The chain runs to 482 residues: tRNA sulfurtransferase (482 aa).

The 105-residue stretch at 61 to 165 folds into the THUMP domain; sequence LAIRDALTRI…DDRLLLIKGR (105 aa). ATP is bound by residues 183–184, K265, G287, and Q296; that span reads LI. A disulfide bond links C344 and C456. The 79-residue stretch at 404 to 482 folds into the Rhodanese domain; it reads FGPNDVILDI…GFNNVKVYRP (79 aa). C456 serves as the catalytic Cysteine persulfide intermediate.

Belongs to the ThiI family.

It localises to the cytoplasm. It carries out the reaction [ThiI sulfur-carrier protein]-S-sulfanyl-L-cysteine + a uridine in tRNA + 2 reduced [2Fe-2S]-[ferredoxin] + ATP + H(+) = [ThiI sulfur-carrier protein]-L-cysteine + a 4-thiouridine in tRNA + 2 oxidized [2Fe-2S]-[ferredoxin] + AMP + diphosphate. The enzyme catalyses [ThiS sulfur-carrier protein]-C-terminal Gly-Gly-AMP + S-sulfanyl-L-cysteinyl-[cysteine desulfurase] + AH2 = [ThiS sulfur-carrier protein]-C-terminal-Gly-aminoethanethioate + L-cysteinyl-[cysteine desulfurase] + A + AMP + 2 H(+). It participates in cofactor biosynthesis; thiamine diphosphate biosynthesis. Functionally, catalyzes the ATP-dependent transfer of a sulfur to tRNA to produce 4-thiouridine in position 8 of tRNAs, which functions as a near-UV photosensor. Also catalyzes the transfer of sulfur to the sulfur carrier protein ThiS, forming ThiS-thiocarboxylate. This is a step in the synthesis of thiazole, in the thiamine biosynthesis pathway. The sulfur is donated as persulfide by IscS. The sequence is that of tRNA sulfurtransferase from Escherichia coli (strain ATCC 8739 / DSM 1576 / NBRC 3972 / NCIMB 8545 / WDCM 00012 / Crooks).